We begin with the raw amino-acid sequence, 253 residues long: Protein C1orf43 (253 aa).

The helical transmembrane segment at Val-11–Val-31 threads the bilayer.

It is found in the membrane. The protein localises to the golgi apparatus. The protein resides in the mitochondrion. Functionally, general regulator of phagocytosis. Required to uptake Gram negative bacterium by macrophages. The protein is Protein C1orf43 (C1orf43) of Homo sapiens (Human).